The following is a 606-amino-acid chain: MSRAAGSTETLKNRFRTDYCGLLNPEVEHQSVKLGGWVHRKRDHGGLIFIDLRDHTGICQIVIQPEEQQLFAKAEQLHLESVICIEGTVVRRSPGAVNPRIPSGEIEVVAAGISVESSAHPLPFPVADEVQTSEELRLKYRFIDLRRDKIHENIIFRSRLTAAIRRYLEEKSFIEIQTPILTSSSPEGARDFLVPSRLHPGKFYALPQAPQQFKQLLMVSGFPRYFQIAPCFRDEDARADRSPGEFYQLDMEMAFIEQDDLFEILEGMFSHLTGSMSTKRIREFPFPRISFRDVMNRYGTDKPDLRIPLEISDVTHLFLQSSFKVFAANTKEGCCVKAMLVKGRGNESRLFYDKAEKRAKELGSGGLAYIQFREDGPKGPLVKFLSGEELAALRELLGVEVGDVVFFGAGKWEQTCRIMGGMRTYFSDLFTLDRDELAFCWVVDFPMYEYNEDQKKIDFSHNPFSMPQGEMDALESMPPLNILAYQYDIVCNGIELSSGAIRNHRPDIMYKAFEIAGYTKEDVDSRFGHMIEAFKLGAPPHGGIAPGLDRLVMILRDEQNIREVIAFPMNQQAQDLMMGSPSEVTPIQLRELHLQVELPKKAEAKP.

Glutamate 187 serves as a coordination point for L-aspartate. An aspartate region spans residues 211–214; that stretch reads QQFK. Residues arginine 233 and histidine 461 each coordinate L-aspartate. 233-235 is a binding site for ATP; the sequence is RDE. Glutamate 495 contacts ATP. Arginine 502 is an L-aspartate binding site. 547–550 contributes to the ATP binding site; it reads GLDR.

It belongs to the class-II aminoacyl-tRNA synthetase family. Type 1 subfamily. Homodimer.

It localises to the cytoplasm. It catalyses the reaction tRNA(Asx) + L-aspartate + ATP = L-aspartyl-tRNA(Asx) + AMP + diphosphate. Functionally, aspartyl-tRNA synthetase with relaxed tRNA specificity since it is able to aspartylate not only its cognate tRNA(Asp) but also tRNA(Asn). Reaction proceeds in two steps: L-aspartate is first activated by ATP to form Asp-AMP and then transferred to the acceptor end of tRNA(Asp/Asn). This chain is Aspartate--tRNA(Asp/Asn) ligase, found in Chlorobium phaeobacteroides (strain DSM 266 / SMG 266 / 2430).